The sequence spans 361 residues: Peptide chain release factor 1 (361 aa).

Gln-235 is subject to N5-methylglutamine. Residues 286-305 are disordered; the sequence is IDSARSAERKQKVGSGDRSE.

Belongs to the prokaryotic/mitochondrial release factor family. In terms of processing, methylated by PrmC. Methylation increases the termination efficiency of RF1.

The protein localises to the cytoplasm. Peptide chain release factor 1 directs the termination of translation in response to the peptide chain termination codons UAG and UAA. This chain is Peptide chain release factor 1, found in Rhodopseudomonas palustris (strain HaA2).